Reading from the N-terminus, the 803-residue chain is MRVPYKWLQQYVDVTLPPAELADKLTMAGLAVEGVEDLTPGFQKVVAGKIKTITPHPDADHLVICNVDAGRELQLVTGAPNVHEGQMVAVALEGARLPGGREIHRATFRGVVSEGMLCSAQELGLDVSLVSPEDREGIITLPPDASPGADAAEVLGLKDVVLVLELTPNRADCLSILGVAREVAAITGAPIHLPATLPGEDGPEITGLATVEITAPDLCARYVARLVQGVRIGPSPAWLQAFLRAAGMRPINNVVDITNFIMLEMGQPLHAFDYDLLEGHRIIVRRAGPGEKITTLDGVERELDPEMLVIADAARPVAVAGVMGGLATEVTPATTNILIESAHFDGASIRRTSRRLGLRSEASTRFERGVNLEGAPAAADRAARLMAELAGGRVAPGRIDCYVKRRQPVTIELRPERVNYLLGTELAPTTMKELLERLHLEVRGEGPFQVTVPAYRGDLTGEIDLVEEIARLYGYNRIPVTLPGNLTAREKQAPAQRWEEAGREAAAAAGLAEVITYSFIGPRALDQLRLPEDHPWRRTVKIQNPLREEQSIMRPSLLPGLLEVAGRNASRRVLPVAIYELGRVFIPAGSRRPGEPLRLAGLVMGTTPRGWNWPAGEMDFYYLKGILESIFSRLRVRDVSWEASNAYPFLHPGRAATIKAGTRVLGYLGELHPDVLAAVELPARACAFELDWEAAGDLALRVPRYEPLPRFPAVERDLAVVVPATTPAAAVAGVIREAGGELLRAIALFDVYEGAPVPEGCKSLAYSLVYQLPDRTLTDAEVNAAQERIQRALEERLGASLRQ.

One can recognise a tRNA-binding domain in the interval 39–152; it reads TPGFQKVVAG…PDASPGADAA (114 aa). Residues 406–480 enclose the B5 domain; it reads RQPVTIELRP…RLYGYNRIPV (75 aa). The Mg(2+) site is built by Asp458, Asp464, Glu467, and Glu468. The FDX-ACB domain occupies 709–802; sequence PRFPAVERDL…LEERLGASLR (94 aa).

It belongs to the phenylalanyl-tRNA synthetase beta subunit family. Type 1 subfamily. Tetramer of two alpha and two beta subunits. The cofactor is Mg(2+).

The protein resides in the cytoplasm. It carries out the reaction tRNA(Phe) + L-phenylalanine + ATP = L-phenylalanyl-tRNA(Phe) + AMP + diphosphate + H(+). This Moorella thermoacetica (strain ATCC 39073 / JCM 9320) protein is Phenylalanine--tRNA ligase beta subunit.